The following is a 478-amino-acid chain: Proline--tRNA ligase (478 aa).

This sequence belongs to the class-II aminoacyl-tRNA synthetase family. ProS type 3 subfamily. Homodimer.

The protein resides in the cytoplasm. It carries out the reaction tRNA(Pro) + L-proline + ATP = L-prolyl-tRNA(Pro) + AMP + diphosphate. Catalyzes the attachment of proline to tRNA(Pro) in a two-step reaction: proline is first activated by ATP to form Pro-AMP and then transferred to the acceptor end of tRNA(Pro). This is Proline--tRNA ligase from Ruminiclostridium cellulolyticum (strain ATCC 35319 / DSM 5812 / JCM 6584 / H10) (Clostridium cellulolyticum).